Here is a 91-residue protein sequence, read N- to C-terminus: Large ribosomal subunit protein uL23 (91 aa).

It belongs to the universal ribosomal protein uL23 family. Part of the 50S ribosomal subunit. Contacts protein L29, and trigger factor when it is bound to the ribosome.

Functionally, one of the early assembly proteins it binds 23S rRNA. One of the proteins that surrounds the polypeptide exit tunnel on the outside of the ribosome. Forms the main docking site for trigger factor binding to the ribosome. In Staphylococcus aureus (strain USA300), this protein is Large ribosomal subunit protein uL23.